Consider the following 606-residue polypeptide: Gastrula zinc finger protein XlCGF66.1 (606 aa).

Disordered regions lie at residues 1 to 31 and 240 to 271; these read MGMWEEASDTGMKGKKKKKDKNEEEEERGKK and TLHSKDSCNEGHKHLSHKSDYNKHQNPHKRQK. Residues 242-262 show a composition bias toward basic and acidic residues; the sequence is HSKDSCNEGHKHLSHKSDYNK. 11 consecutive C2H2-type zinc fingers follow at residues 273 to 295, 300 to 322, 328 to 350, 384 to 407, 413 to 435, 441 to 464, 470 to 492, 498 to 521, 527 to 549, 555 to 578, and 584 to 606; these read FSCSKCGKCFSNLTSLHCHQKTH, LLCLKCGKCFATSSKLIIHRQTH, FSCSECRICFSKQSSLARHQITH, DFCSECGKCFATSSQLIAHQQQVH, FSCTKCGKCFSYRSRLVRHQRTH, YSCSECGKCFASSSHLIGHRQQVH, FFCSECGKYFLYQSQLVRHQRTH, YSCSECGKCFATSSQLMAHQQQVH, FSCSECGKYFLYRAHLVRHQRTH, DFCFECGKCFATSLQLIAHQQQVH, and FSCSECGKSFLYRSHLARHHRTH.

The protein belongs to the krueppel C2H2-type zinc-finger protein family.

It is found in the nucleus. Its function is as follows. May be involved in transcriptional regulation. The chain is Gastrula zinc finger protein XlCGF66.1 from Xenopus laevis (African clawed frog).